A 315-amino-acid polypeptide reads, in one-letter code: 2-oxoglutarate and iron-dependent oxygenase domain-containing protein 3 (315 aa).

Positions 1-32 (MAPQRRGPPRVPEGNSAAERRHANSTKKDRLP) are disordered. Topologically, residues 1-41 (MAPQRRGPPRVPEGNSAAERRHANSTKKDRLPQEAQRTWLR) are cytoplasmic. The span at 18-32 (AERRHANSTKKDRLP) shows a compositional bias: basic and acidic residues. Residues 42–62 (IVALGVSLALVTFLLWSSAGI) form a helical; Signal-anchor for type II membrane protein membrane-spanning segment. Over 63–315 (DDDVAEVVAH…DHGIEDPVLT (253 aa)) the chain is Lumenal. The region spanning 203 to 305 (KPTFFSRINS…AITIAFTCNP (103 aa)) is the Fe2OG dioxygenase domain. An N-linked (GlcNAc...) asparagine glycan is attached at asparagine 211. 2 residues coordinate Fe cation: histidine 226 and aspartate 228. A glycan (N-linked (GlcNAc...) asparagine) is linked at asparagine 263. Histidine 284 contacts Fe cation. The active site involves arginine 294. Arginine 294 provides a ligand contact to 2-oxoglutarate.

The protein belongs to the OGFOD3 family. Fe(2+) is required as a cofactor. It depends on L-ascorbate as a cofactor.

It localises to the membrane. The protein is 2-oxoglutarate and iron-dependent oxygenase domain-containing protein 3 (Ogfod3) of Rattus norvegicus (Rat).